Here is a 267-residue protein sequence, read N- to C-terminus: Pro-opiomelanocortin (267 aa).

Residues 1-26 (MPRLCGSRSGALLLTLLLQASMGVRG) form the signal peptide. A Phenylalanine amide modification is found at F87. Disordered regions lie at residues 88-156 (GRRN…RPVK) and 215-242 (KKDE…GFMT). N-linked (GlcNAc...) asparagine glycosylation is present at N91. Positions 94–105 (SSGGGGGGGGAG) are enriched in gly residues. A propeptide spanning residues 109–133 (EEEEVAAGEGPGPRGDGVAPGPRQD) is cleaved from the precursor. The segment covering 131–143 (RQDKRSYSMEHFR) has biased composition (basic and acidic residues). Residue S136 is modified to N-acetylserine; in Corticotropin. V148 is modified (valine amide). Positions 215–237 (KKDEGPYKMEHFRWGSPPKDKRY) are enriched in basic and acidic residues.

It belongs to the POMC family. In terms of processing, specific enzymatic cleavages at paired basic residues yield the different active peptides. In terms of tissue distribution, ACTH and MSH are produced by the pituitary gland.

The protein localises to the secreted. Stimulates the adrenal glands to release cortisol. Its function is as follows. Anorexigenic peptide. Increases the pigmentation of skin by increasing melanin production in melanocytes. In terms of biological role, increases the pigmentation of skin by increasing melanin production in melanocytes. Functionally, endogenous orexigenic opiate. Endogenous opiate. This chain is Pro-opiomelanocortin (POMC), found in Sus scrofa (Pig).